The following is a 398-amino-acid chain: Tryptophan synthase beta chain (398 aa).

Lys88 carries the post-translational modification N6-(pyridoxal phosphate)lysine.

The protein belongs to the TrpB family. As to quaternary structure, tetramer of two alpha and two beta chains. Pyridoxal 5'-phosphate is required as a cofactor.

It catalyses the reaction (1S,2R)-1-C-(indol-3-yl)glycerol 3-phosphate + L-serine = D-glyceraldehyde 3-phosphate + L-tryptophan + H2O. The protein operates within amino-acid biosynthesis; L-tryptophan biosynthesis; L-tryptophan from chorismate: step 5/5. Functionally, the beta subunit is responsible for the synthesis of L-tryptophan from indole and L-serine. In Actinobacillus succinogenes (strain ATCC 55618 / DSM 22257 / CCUG 43843 / 130Z), this protein is Tryptophan synthase beta chain.